The sequence spans 728 residues: Elongation factor 2 (728 aa).

A tr-type G domain is found at 19–261 (EQIRNIAIAA…MVAEHFPNPI (243 aa)). Residues 28–35 (AHVDHGKT), 94–98 (DTPGH), and 148–151 (NKVD) contribute to the GTP site. Position 596 is a diphthamide (His-596).

The protein belongs to the TRAFAC class translation factor GTPase superfamily. Classic translation factor GTPase family. EF-G/EF-2 subfamily.

It localises to the cytoplasm. Its function is as follows. Catalyzes the GTP-dependent ribosomal translocation step during translation elongation. During this step, the ribosome changes from the pre-translocational (PRE) to the post-translocational (POST) state as the newly formed A-site-bound peptidyl-tRNA and P-site-bound deacylated tRNA move to the P and E sites, respectively. Catalyzes the coordinated movement of the two tRNA molecules, the mRNA and conformational changes in the ribosome. This chain is Elongation factor 2, found in Halobacterium salinarum (strain ATCC 29341 / DSM 671 / R1).